The primary structure comprises 372 residues: MNLSSLSFRLLATLLGACVVVAPASAERIKDLAQVGGVRGNALVGYGLVVGLDGSGDRTSQAPFTVQSLKNLLGELGVNVPANVNPQLKNVAAVAIHAELPPFAKPGQPIDITVSSIANAVSLRGGSLLMAPLKGADGQVYAMAQGNLVVGGFGAQGKDGSRVSVNVPSVGRIPNGAIVERALPDVFAGTGEITLNLHQNDFTTVSRMVAAIDSSFGAGTARAVDGVTVAVRSPTDPGARIGLLSRLENVELSPGDAPAKVVVNARTGTVVIGQLVRVMPAAIAHGSLTVTISENTNVSQPGAFSGGRTAVTQQSTITATSEGSRMFKFEGGTTLDQIVRAVNEVGAAPGDLVAILEALKQAGALSAELEVI.

The first 26 residues, 1–26 (MNLSSLSFRLLATLLGACVVVAPASA), serve as a signal peptide directing secretion.

Belongs to the FlgI family. In terms of assembly, the basal body constitutes a major portion of the flagellar organelle and consists of four rings (L,P,S, and M) mounted on a central rod.

It is found in the periplasm. The protein localises to the bacterial flagellum basal body. In terms of biological role, assembles around the rod to form the L-ring and probably protects the motor/basal body from shearing forces during rotation. The protein is Flagellar P-ring protein of Xanthomonas oryzae pv. oryzae (strain MAFF 311018).